We begin with the raw amino-acid sequence, 363 residues long: tRNA dimethylallyltransferase (363 aa).

An ATP-binding site is contributed by 65–72; the sequence is GPTASGKS. 67 to 72 is a substrate binding site; sequence TASGKS. Interaction with substrate tRNA stretches follow at residues 90–93 and 214–218; these read DSMQ and QRLIR.

Belongs to the IPP transferase family. Monomer. Mg(2+) is required as a cofactor.

The enzyme catalyses adenosine(37) in tRNA + dimethylallyl diphosphate = N(6)-dimethylallyladenosine(37) in tRNA + diphosphate. Functionally, catalyzes the transfer of a dimethylallyl group onto the adenine at position 37 in tRNAs that read codons beginning with uridine, leading to the formation of N6-(dimethylallyl)adenosine (i(6)A). The chain is tRNA dimethylallyltransferase from Rickettsia massiliae (strain Mtu5).